A 687-amino-acid polypeptide reads, in one-letter code: Glycine--tRNA ligase beta subunit (687 aa).

Belongs to the class-II aminoacyl-tRNA synthetase family. Tetramer of two alpha and two beta subunits.

It is found in the cytoplasm. It carries out the reaction tRNA(Gly) + glycine + ATP = glycyl-tRNA(Gly) + AMP + diphosphate. This is Glycine--tRNA ligase beta subunit from Neisseria meningitidis serogroup B (strain ATCC BAA-335 / MC58).